Reading from the N-terminus, the 426-residue chain is Serine--tRNA ligase (426 aa).

233–235 (TAE) contributes to the L-serine binding site. An ATP-binding site is contributed by 264-266 (RSE). Position 287 (Glu-287) interacts with L-serine. Residue 351–354 (EISS) coordinates ATP. Ser-387 contacts L-serine.

This sequence belongs to the class-II aminoacyl-tRNA synthetase family. Type-1 seryl-tRNA synthetase subfamily. Homodimer. The tRNA molecule binds across the dimer.

It localises to the cytoplasm. It carries out the reaction tRNA(Ser) + L-serine + ATP = L-seryl-tRNA(Ser) + AMP + diphosphate + H(+). It catalyses the reaction tRNA(Sec) + L-serine + ATP = L-seryl-tRNA(Sec) + AMP + diphosphate + H(+). It functions in the pathway aminoacyl-tRNA biosynthesis; selenocysteinyl-tRNA(Sec) biosynthesis; L-seryl-tRNA(Sec) from L-serine and tRNA(Sec): step 1/1. Functionally, catalyzes the attachment of serine to tRNA(Ser). Is also able to aminoacylate tRNA(Sec) with serine, to form the misacylated tRNA L-seryl-tRNA(Sec), which will be further converted into selenocysteinyl-tRNA(Sec). This chain is Serine--tRNA ligase, found in Pseudomonas syringae pv. tomato (strain ATCC BAA-871 / DC3000).